The chain runs to 188 residues: Peptidyl-tRNA hydrolase (188 aa).

Tyr-14 is a tRNA binding site. The Proton acceptor role is filled by His-19. TRNA contacts are provided by Tyr-64, Asn-66, and Asn-112.

It belongs to the PTH family. As to quaternary structure, monomer.

Its subcellular location is the cytoplasm. It catalyses the reaction an N-acyl-L-alpha-aminoacyl-tRNA + H2O = an N-acyl-L-amino acid + a tRNA + H(+). Hydrolyzes ribosome-free peptidyl-tRNAs (with 1 or more amino acids incorporated), which drop off the ribosome during protein synthesis, or as a result of ribosome stalling. In terms of biological role, catalyzes the release of premature peptidyl moieties from peptidyl-tRNA molecules trapped in stalled 50S ribosomal subunits, and thus maintains levels of free tRNAs and 50S ribosomes. The protein is Peptidyl-tRNA hydrolase of Bacillus pumilus (strain SAFR-032).